The sequence spans 87 residues: Putative regulatory protein GK1166 (87 aa).

It belongs to the RemA family.

The chain is Putative regulatory protein GK1166 from Geobacillus kaustophilus (strain HTA426).